A 185-amino-acid polypeptide reads, in one-letter code: MTRNILLTVTLICIVFITVGGQSPATAPIHSPSTSPHKPKPTSPAISPAAPTPESTEAPAKTPVEAPVEAPPSPTPASTPQISPPAPSPEADTPSAPEIAPSADVPAPALTKHKKKTKKHKTAPAPGPASELLSPPAPPGEAPGPGPSDAFSPAADDQSGAQRISVVIQMVGAAAIAWSLLVLAF.

Positions 1–21 (MTRNILLTVTLICIVFITVGG) are cleaved as a signal peptide. Residues 25–160 (ATAPIHSPST…FSPAADDQSG (136 aa)) are disordered. Positions 43 to 68 (SPAISPAAPTPESTEAPAKTPVEAPV) are enriched in low complexity. The span at 69–88 (EAPPSPTPASTPQISPPAPS) shows a compositional bias: pro residues. Residues 111 to 122 (TKHKKKTKKHKT) are compositionally biased toward basic residues. The span at 135-146 (PPAPPGEAPGPG) shows a compositional bias: pro residues. S159 is lipidated: GPI-anchor amidated serine. Positions 160–185 (GAQRISVVIQMVGAAAIAWSLLVLAF) are cleaved as a propeptide — removed in mature form.

It belongs to the lysine-rich AGP family. Post-translationally, O-glycosylated on the hydroxyproline residues. Predominantly expressed in open flowers. Also expressed in leaves and stems, and at a lower level in roots.

It localises to the cell membrane. Functionally, proteoglycan that seems to be implicated in diverse developmental roles such as differentiation, cell-cell recognition, embryogenesis and programmed cell death. In Arabidopsis thaliana (Mouse-ear cress), this protein is Lysine-rich arabinogalactan protein 17 (AGP17).